The sequence spans 195 residues: Segregation and condensation protein B (195 aa).

The interval 169–195 (LEDVAASQENSREAGGRGSIPGHPGEE) is disordered.

Belongs to the ScpB family. Homodimer. Homodimerization may be required to stabilize the binding of ScpA to the Smc head domains. Component of a cohesin-like complex composed of ScpA, ScpB and the Smc homodimer, in which ScpA and ScpB bind to the head domain of Smc. The presence of the three proteins is required for the association of the complex with DNA.

It is found in the cytoplasm. In terms of biological role, participates in chromosomal partition during cell division. May act via the formation of a condensin-like complex containing Smc and ScpA that pull DNA away from mid-cell into both cell halves. The chain is Segregation and condensation protein B from Moorella thermoacetica (strain ATCC 39073 / JCM 9320).